The chain runs to 647 residues: MTVGRPEGAPGGAEGSRQIFPPESFADTEAGEELSGDGLVLPRASKLDEFLSPEEEIDSTSDSTGSIYQNLQELKQKGRWCLLESLFQSDPESDENLSEDEEDLESFFQDKDRGMVQVQCPQALRCGSTRRCSSLNNLPSNIPRPQTQPPSGSRPPSQHRSVSSWASSITVPRPFRMTLREARKKAEWLGSPASFEQERQRAQRQGEEEAECHRQFRAQPVPAHVYLPLYQEIMERSEARRQAGIQKRKELLLSSLKPFSFLEKEEQLKEAARQRDLAATAEAKISKQKATRRIPKSILEPALGDKLQEAELFRKIRIQMRALDMLQMASSPIASSSNRANPQPRTATRTQQEKLGFLHTNFRFQPRVNPVVPDYEGLYKAFQRRAAKRRETQEATRNKPFLLRTANLRHPQRPCDAATTGRRQDSPQPPATPLPRSRSLSGLASLSANTLPVHITDATRKRESAVRSALEKKNKADESIQWLEIHKKKSQAMSKSVTLRAKAMDPHKSLEEVFKAKLKENRNNDRKRAKEYKKELEEMKQRIQTRPYLFEQVAKDLAKKEAEQWYLDTLKQAGLEEDFVRNKGQGTRAVQEKETKIKDFPRFQETTKLSIRDPEQGLEGSLEQPASPRKVLEELSHQSPENLVSLA.

3 disordered regions span residues 1-39 (MTVGRPEGAPGGAEGSRQIFPPESFADTEAGEELSGDGL), 89-110 (SDPESDENLSEDEEDLESFFQD), and 135-167 (LNNLPSNIPRPQTQPPSGSRPPSQHRSVSSWAS). A compositionally biased stretch (acidic residues) spans 91–105 (PESDENLSEDEEDLE). Positions 262–292 (LEKEEQLKEAARQRDLAATAEAKISKQKATR) form a coiled coil. Positions 332 to 350 (PIASSSNRANPQPRTATRT) are enriched in polar residues. Disordered regions lie at residues 332–352 (PIASSSNRANPQPRTATRTQQ) and 388–439 (KRRE…RSRS). The stretch at 510 to 546 (LEEVFKAKLKENRNNDRKRAKEYKKELEEMKQRIQTR) forms a coiled coil. Residues 583 to 647 (KGQGTRAVQE…QSPENLVSLA (65 aa)) are disordered. The segment covering 590 to 602 (VQEKETKIKDFPR) has biased composition (basic and acidic residues). The segment covering 637–647 (HQSPENLVSLA) has biased composition (polar residues).

The protein belongs to the FAM161 family. As to quaternary structure, interacts with FAM161A. As to expression, ubiquitously expressed.

The protein is Protein FAM161B (FAM161B) of Homo sapiens (Human).